The following is a 272-amino-acid chain: MTLQEQIMKALHVQPVIDPKAEIRKRVDFLKDYVKKTGAKGFVLGISGGQDSTLAGRLAQLAVEEIRNEGGNVTFIAVRLPYKVQKDEDDAQLALQFIQADQSVAFDIASTVDAFSNQYENLLDESLTDFNKGNVKARIRMVTQYAIGGQKGLLVIGTDHAAEAVTGFFTKFGDGGADLLPLTGLTKRQGRALLQELGADERLYLKMPTADLLDEKPGQADETELGITYDQLDDYLEGKTVPADVAEKIEKRYTVSEHKRQVPASMFDDWWK.

45–52 is an ATP binding site; the sequence is GISGGQDS. D51 contributes to the Mg(2+) binding site. R138 provides a ligand contact to deamido-NAD(+). T158 is an ATP binding site. E163 provides a ligand contact to Mg(2+). K171 and D178 together coordinate deamido-NAD(+). Positions 187 and 209 each coordinate ATP. 258–259 is a deamido-NAD(+) binding site; sequence HK.

This sequence belongs to the NAD synthetase family. As to quaternary structure, homodimer.

The enzyme catalyses deamido-NAD(+) + NH4(+) + ATP = AMP + diphosphate + NAD(+) + H(+). The protein operates within cofactor biosynthesis; NAD(+) biosynthesis; NAD(+) from deamido-NAD(+) (ammonia route): step 1/1. In terms of biological role, catalyzes the ATP-dependent amidation of deamido-NAD to form NAD. Uses ammonia as a nitrogen source. In Bacillus cereus (strain 03BB102), this protein is NH(3)-dependent NAD(+) synthetase.